A 226-amino-acid polypeptide reads, in one-letter code: Prolactin (226 aa).

Residues 1-29 form the signal peptide; the sequence is MNSQGSAQKAGTLLLLLISNLLFCQNVQP. Cysteine 33 and cysteine 38 are oxidised to a cystine. Serine 53 and serine 117 each carry phosphoserine. Cystine bridges form between cysteine 85-cysteine 201 and cysteine 218-cysteine 226.

The protein belongs to the somatotropin/prolactin family. Interacts with PRLR.

The protein resides in the secreted. Functionally, prolactin acts primarily on the mammary gland by promoting lactation. The chain is Prolactin (Prl) from Mus musculus (Mouse).